We begin with the raw amino-acid sequence, 284 residues long: MREITPRKIIEMKGKEKIAMVTAYDYPSALLADKAGMDIVFVGDSLGMVVYGEPNTLNVSMEQMVFHTRAVAKAVKRALVLADMPFGSYEVSVEEGVKNAMRLIRAGADAVKIEGGYDHKKLVKKLVRMGIPVMGHTGLTPQRYLRLGGYRLMGETEEEIEEILRDAKALEKAGAFAVVLEFVLADVAKLVTEEVSIPTIGIGAGPHVDGQVLVWHDLLGIYENVPPFVKKYADLASIIQLALENYRGEVKEGRFPAKEHYWEFLDKDDFERKKMKALERLEDE.

Residues Asp-44 and Asp-83 each coordinate Mg(2+). Residues 44–45, Asp-83, and Lys-112 contribute to the 3-methyl-2-oxobutanoate site; that span reads DS. Residue Glu-114 coordinates Mg(2+). Glu-181 serves as the catalytic Proton acceptor.

Belongs to the PanB family. In terms of assembly, homodecamer; pentamer of dimers. The cofactor is Mg(2+).

It localises to the cytoplasm. The enzyme catalyses 3-methyl-2-oxobutanoate + (6R)-5,10-methylene-5,6,7,8-tetrahydrofolate + H2O = 2-dehydropantoate + (6S)-5,6,7,8-tetrahydrofolate. Its pathway is cofactor biosynthesis; coenzyme A biosynthesis. Neither activated nor inhibited by coenzyme A. Catalyzes the reversible reaction in which hydroxymethyl group from 5,10-methylenetetrahydrofolate is transferred onto alpha-ketoisovalerate to form ketopantoate. In Thermococcus kodakarensis (strain ATCC BAA-918 / JCM 12380 / KOD1) (Pyrococcus kodakaraensis (strain KOD1)), this protein is 3-methyl-2-oxobutanoate hydroxymethyltransferase.